Here is a 108-residue protein sequence, read N- to C-terminus: UPF0060 membrane protein DSY4157 (108 aa).

The next 4 helical transmembrane spans lie at 6–26 (ILFILAGLAEIGGGYLVWLWL), 31–51 (PYWYGVIGAIILVFYGIIPTL), 60–80 (VYAAYGGVFIILAVLWGWGVD), and 86–106 (TYDWIGAAICLVGVTVMLWAP).

This sequence belongs to the UPF0060 family.

It localises to the cell membrane. The sequence is that of UPF0060 membrane protein DSY4157 from Desulfitobacterium hafniense (strain Y51).